The following is a 346-amino-acid chain: Magnesium-protoporphyrin IX monomethyl ester [oxidative] cyclase (346 aa).

The protein belongs to the AcsF family. It depends on Fe cation as a cofactor.

The catalysed reaction is Mg-protoporphyrin IX 13-monomethyl ester + 3 NADPH + 3 O2 + 2 H(+) = 3,8-divinyl protochlorophyllide a + 3 NADP(+) + 5 H2O. Its pathway is porphyrin-containing compound metabolism; chlorophyll biosynthesis (light-independent). Functionally, catalyzes the formation of the isocyclic ring in chlorophyll biosynthesis. Mediates the cyclase reaction, which results in the formation of divinylprotochlorophyllide (Pchlide) characteristic of all chlorophylls from magnesium-protoporphyrin IX 13-monomethyl ester (MgPMME). The sequence is that of Magnesium-protoporphyrin IX monomethyl ester [oxidative] cyclase from Gloeobacter violaceus (strain ATCC 29082 / PCC 7421).